We begin with the raw amino-acid sequence, 83 residues long: Large ribosomal subunit protein bL31B (83 aa).

The protein belongs to the bacterial ribosomal protein bL31 family. Type B subfamily. As to quaternary structure, part of the 50S ribosomal subunit.

Binds the 23S rRNA. The sequence is that of Large ribosomal subunit protein bL31B from Hydrogenovibrio crunogenus (strain DSM 25203 / XCL-2) (Thiomicrospira crunogena).